The following is a 334-amino-acid chain: Pantothenate synthetase (334 aa).

Residue 34-41 (MGALHEGH) coordinates ATP. His41 serves as the catalytic Proton donor. Gln71 lines the (R)-pantoate pocket. Gln71 serves as a coordination point for beta-alanine. An ATP-binding site is contributed by 158–161 (GQKD). Residue Gln164 participates in (R)-pantoate binding. ATP contacts are provided by residues Val187 and 195-198 (LSSR). Residues 288–334 (PLMLGTRGPAGEASPPNRERSEPGSAEQNKSPGEARTTPSGTSEASE) are disordered. The segment covering 313–334 (AEQNKSPGEARTTPSGTSEASE) has biased composition (polar residues).

It belongs to the pantothenate synthetase family. In terms of assembly, homodimer.

Its subcellular location is the cytoplasm. The catalysed reaction is (R)-pantoate + beta-alanine + ATP = (R)-pantothenate + AMP + diphosphate + H(+). The protein operates within cofactor biosynthesis; (R)-pantothenate biosynthesis; (R)-pantothenate from (R)-pantoate and beta-alanine: step 1/1. Its function is as follows. Catalyzes the condensation of pantoate with beta-alanine in an ATP-dependent reaction via a pantoyl-adenylate intermediate. This Nocardioides sp. (strain ATCC BAA-499 / JS614) protein is Pantothenate synthetase.